Reading from the N-terminus, the 481-residue chain is ATP synthase subunit beta, chloroplastic (481 aa).

161–168 (GGAGVGKT) contributes to the ATP binding site.

It belongs to the ATPase alpha/beta chains family. F-type ATPases have 2 components, CF(1) - the catalytic core - and CF(0) - the membrane proton channel. CF(1) has five subunits: alpha(3), beta(3), gamma(1), delta(1), epsilon(1). CF(0) has four main subunits: a(1), b(1), b'(1) and c(9-12).

It is found in the plastid. It localises to the chloroplast thylakoid membrane. It carries out the reaction ATP + H2O + 4 H(+)(in) = ADP + phosphate + 5 H(+)(out). In terms of biological role, produces ATP from ADP in the presence of a proton gradient across the membrane. The catalytic sites are hosted primarily by the beta subunits. This is ATP synthase subunit beta, chloroplastic from Dictyota dichotoma.